We begin with the raw amino-acid sequence, 299 residues long: DNA-binding transcriptional repressor CapW (299 aa).

Residues 1–22 form a disordered region; that stretch reads MTDESKPTDDQPTSKGRQGARW. Positions 1 to 95 are winged HTH domain; it reads MTDESKPTDD…SFKAVFPSSA (95 aa). Residues 96 to 207 are WYL domain; it reads VERYLDDLLR…LTRIKCCKYV (112 aa). Positions 131–211 constitute a WYL domain; that stretch reads GRRLNADIVG…KCCKYVGQDR (81 aa). Residues 156 to 200 are probable ligand-binding region; sequence YQSLTDPEGGERMLSPHALVHDGNRWHVRAYCHKRKAFRDFSLTR. A WCX domain region spans residues 208 to 299; sequence GQDRDRADED…RDEIKDLIQY (92 aa).

In terms of assembly, homodimer.

Functionally, transcriptional regulator of a CBASS antivirus system. CBASS (cyclic oligonucleotide-based antiphage signaling system) provides immunity against bacteriophage. The CD-NTase protein synthesizes cyclic nucleotides in response to infection; these serve as specific second messenger signals. The signals activate a diverse range of effectors, leading to bacterial cell death and thus abortive phage infection. A type III CBASS system, part of a Cap17-CapW-CdnC-Cap7-Cap6-Cap18 locus. Binds specifically to palindromes that overlap the -10 site in the promoter of cdnC, found between the genes for divergently transcribed capW and cdnC (cognate DNA). Probably represses transcription bidirectionally from the promoter. The sequence is that of DNA-binding transcriptional repressor CapW from Pseudomonas aeruginosa.